The following is a 173-amino-acid chain: uncharacterized protein (173 aa).

This is an uncharacterized protein from Saccharomyces cerevisiae (strain ATCC 204508 / S288c) (Baker's yeast).